Reading from the N-terminus, the 66-residue chain is Large ribosomal subunit protein bL33c (66 aa).

This sequence belongs to the bacterial ribosomal protein bL33 family.

The protein resides in the plastid. The protein localises to the chloroplast. The chain is Large ribosomal subunit protein bL33c from Ipomoea purpurea (Common morning glory).